The primary structure comprises 218 residues: 25 kDa calcium-binding protein (218 aa).

EF-hand domains are found at residues 24 to 59, 66 to 101, 128 to 163, and 171 to 206; these read GAKT…AYKS, PSSD…YLTG, AKLD…TYAE, and PTKE…SLQK. D37, R43, D48, D79, N81, D83, D90, D141, D143, S145, Q147, E152, D184, N186, D188, S190, and E195 together coordinate Ca(2+).

Expected to play a crucial role in calcium-dependent regulation of ciliary movement. The sequence is that of 25 kDa calcium-binding protein from Tetrahymena thermophila.